Here is a 223-residue protein sequence, read N- to C-terminus: Thiamine-phosphate synthase (223 aa).

Residues 42–46 and Asn83 contribute to the 4-amino-2-methyl-5-(diphosphooxymethyl)pyrimidine site; that span reads QLRDK. Asp84 and Asp103 together coordinate Mg(2+). Ser122 is a binding site for 4-amino-2-methyl-5-(diphosphooxymethyl)pyrimidine. 148 to 150 serves as a coordination point for 2-[(2R,5Z)-2-carboxy-4-methylthiazol-5(2H)-ylidene]ethyl phosphate; sequence TPT. Lys151 is a 4-amino-2-methyl-5-(diphosphooxymethyl)pyrimidine binding site. Gly179 is a binding site for 2-[(2R,5Z)-2-carboxy-4-methylthiazol-5(2H)-ylidene]ethyl phosphate.

The protein belongs to the thiamine-phosphate synthase family. The cofactor is Mg(2+).

The catalysed reaction is 2-[(2R,5Z)-2-carboxy-4-methylthiazol-5(2H)-ylidene]ethyl phosphate + 4-amino-2-methyl-5-(diphosphooxymethyl)pyrimidine + 2 H(+) = thiamine phosphate + CO2 + diphosphate. The enzyme catalyses 2-(2-carboxy-4-methylthiazol-5-yl)ethyl phosphate + 4-amino-2-methyl-5-(diphosphooxymethyl)pyrimidine + 2 H(+) = thiamine phosphate + CO2 + diphosphate. It carries out the reaction 4-methyl-5-(2-phosphooxyethyl)-thiazole + 4-amino-2-methyl-5-(diphosphooxymethyl)pyrimidine + H(+) = thiamine phosphate + diphosphate. It functions in the pathway cofactor biosynthesis; thiamine diphosphate biosynthesis; thiamine phosphate from 4-amino-2-methyl-5-diphosphomethylpyrimidine and 4-methyl-5-(2-phosphoethyl)-thiazole: step 1/1. Functionally, condenses 4-methyl-5-(beta-hydroxyethyl)thiazole monophosphate (THZ-P) and 2-methyl-4-amino-5-hydroxymethyl pyrimidine pyrophosphate (HMP-PP) to form thiamine monophosphate (TMP). The polypeptide is Thiamine-phosphate synthase (Mycolicibacterium paratuberculosis (strain ATCC BAA-968 / K-10) (Mycobacterium paratuberculosis)).